A 368-amino-acid chain; its full sequence is N-succinylamino acid racemase (368 aa).

Residues Ser-135 and 161–163 (KLK) contribute to the 2-succinylbenzoate site. Catalysis depends on Lys-163, which acts as the Proton donor. Asp-189 contacts Mg(2+). Asn-191 serves as a coordination point for 2-succinylbenzoate. The Mg(2+) site is built by Glu-214 and Asp-239. The active-site Proton acceptor is Lys-263. Ile-293 is a binding site for 2-succinylbenzoate.

It belongs to the mandelate racemase/muconate lactonizing enzyme family. MenC type 2 subfamily. In terms of assembly, homooctamer. The cofactor is a divalent metal cation.

The catalysed reaction is N-acetyl-D-methionine = N-acetyl-L-methionine. It carries out the reaction (1R,6R)-6-hydroxy-2-succinyl-cyclohexa-2,4-diene-1-carboxylate = 2-succinylbenzoate + H2O. With respect to regulation, inhibited by EDTA and sulfhydryl reagents such as p-chloromercuribenzoic acid. Both OSBS and NAAAR activities are inhibited competitively by salicylhydroxamate. Acts as a N-succinylamino acid racemase (NSAR) that catalyzes the racemization of N-succinyl-phenylglycine and N-succinyl-methionine. Can catalyze the racemization of a broad range of N-acylamino acids, including N-acetyl-D/L-methionine, N-propionyl-D/L-methionine, N-butyryl-D/L-methionine and N-chloroacetyl-L-valine. Also converts 2-succinyl-6-hydroxy-2,4-cyclohexadiene-1-carboxylate (SHCHC) to 2-succinylbenzoate (OSB). Catalyzes both N-succinylamino acid racemization and OSB synthesis at equivalent rates. NSAR is probably the biological function of this enzyme. The protein is N-succinylamino acid racemase of Amycolatopsis sp.